The following is a 120-amino-acid chain: NAD(P)H-quinone oxidoreductase subunit 3 (120 aa).

Transmembrane regions (helical) follow at residues 6 to 26 (GYDA…LALV), 64 to 84 (MFAL…PWAV), and 89 to 109 (LGLL…VALA).

The protein belongs to the complex I subunit 3 family. In terms of assembly, NDH-1 can be composed of about 15 different subunits; different subcomplexes with different compositions have been identified which probably have different functions.

Its subcellular location is the cellular thylakoid membrane. It carries out the reaction a plastoquinone + NADH + (n+1) H(+)(in) = a plastoquinol + NAD(+) + n H(+)(out). The catalysed reaction is a plastoquinone + NADPH + (n+1) H(+)(in) = a plastoquinol + NADP(+) + n H(+)(out). In terms of biological role, NDH-1 shuttles electrons from an unknown electron donor, via FMN and iron-sulfur (Fe-S) centers, to quinones in the respiratory and/or the photosynthetic chain. The immediate electron acceptor for the enzyme in this species is believed to be plastoquinone. Couples the redox reaction to proton translocation, and thus conserves the redox energy in a proton gradient. Cyanobacterial NDH-1 also plays a role in inorganic carbon-concentration. In Prochlorococcus marinus (strain MIT 9313), this protein is NAD(P)H-quinone oxidoreductase subunit 3.